A 355-amino-acid polypeptide reads, in one-letter code: Guanine nucleotide-binding protein subunit beta-5a (355 aa).

The interval methionine 1–threonine 23 is disordered. WD repeat units lie at residues glycine 63–alanine 102, methionine 105–leucine 144, methionine 153–histidine 194, glycine 195–glutamate 238, serine 239–isoleucine 278, serine 280–isoleucine 322, and glycine 325–alanine 355.

It belongs to the WD repeat G protein beta family. In terms of assembly, may interact with RGS9; this interaction stabilizes both proteins and increases RGS9 GTPase-activating protein (GAP) activity, hence accelerating the deactivation of D(2) dopamine receptor-mediated signaling.

It localises to the membrane. Its function is as follows. Enhances GTPase-activating protein (GAP) activity of regulator of G protein signaling (RGS) proteins, such as RGS7 and RGS9, hence involved in the termination of the signaling initiated by the G protein coupled receptors (GPCRs) by accelerating the GTP hydrolysis on the G-alpha subunits, thereby promoting their inactivation. Increases RGS7 GTPase-activating protein (GAP) activity, thereby regulating mood and cognition. Increases RGS9 GTPase-activating protein (GAP) activity, hence contributes to the deactivation of G protein signaling initiated by D(2) dopamine receptors. Along with gnb5b, plays an important role in neuronal signaling, including in the parasympathetic, but not sympathetic, control of heart rate. This is Guanine nucleotide-binding protein subunit beta-5a from Danio rerio (Zebrafish).